The following is a 20-amino-acid chain: Styelin-A (20 aa).

In terms of tissue distribution, hemocytes and pharyngeal tissues.

The protein localises to the secreted. Bactericidal against several Gram-positive and Gram-negative bacteria. In Styela clava (Sea squirt), this protein is Styelin-A.